The primary structure comprises 321 residues: Basic endochitinase A (321 aa).

Residues 1-19 (MGAFALFAVLAMAVTMAVA) form the signal peptide. Positions 20–60 (EQCGSQAGGATCPNCLCCSRFGWCGSTSDYCGDGCQSQCAG) constitute a Chitin-binding type-1 domain. Intrachain disulfides connect C22/C37, C31/C43, C34/C61, C36/C50, and C54/C58. The interval 62-79 (GGGGTPVTPTPTPSGGGG) is hinge region (Gly/Pro/Thr-rich). The segment at 80-321 (VSSIVSRALF…LDCYNQRPFA (242 aa)) is catalytic. Intrachain disulfides connect C101–C163, C175–C183, and C301–C314. The active-site Proton donor is E145.

This sequence belongs to the glycosyl hydrolase 19 family. Chitinase class I subfamily. Localized in the aleurone cells of the seed endosperm (at protein level).

It catalyses the reaction Random endo-hydrolysis of N-acetyl-beta-D-glucosaminide (1-&gt;4)-beta-linkages in chitin and chitodextrins.. In terms of biological role, defense against chitin-containing fungal pathogens. Binds the hyphal tips, lateral walls and septa of fungi and degrades mature chitin. This chain is Basic endochitinase A, found in Secale cereale (Rye).